Here is an 815-residue protein sequence, read N- to C-terminus: Vacuolar proton translocating ATPase 100 kDa subunit (815 aa).

At 1-402 the chain is on the cytoplasmic side; sequence MSFLRPSIWR…NAYGIAHYRE (402 aa). A helical membrane pass occupies residues 403–421; that stretch reads VNPAVLTIVTFPFLFGVMF. The Vacuolar segment spans residues 422–423; sequence GD. The helical transmembrane segment at 424–440 threads the bilayer; it reads VGHGALLLLSALGLISL. Topologically, residues 441 to 454 are cytoplasmic; the sequence is EKKLAGKKLNELIQ. Residues 455-484 traverse the membrane as a helical segment; that stretch reads MPFDGRYVLFLMSLFSIYVGFIYNECFSIP. At 485–530 the chain is on the vacuolar side; sequence MNIFGSQYNLNSTTGLYTYQHTDRVYPVGVDPLWKGAPNELVYYNS. A helical membrane pass occupies residues 531–550; the sequence is FKMKLSIIFGVVQMSVGICF. The Cytoplasmic portion of the chain corresponds to 551-571; that stretch reads SLLNYLNQKGPIKIVNILTQF. The helical transmembrane segment at 572–592 threads the bilayer; the sequence is VPQMIFLWSIFGYMSVLIILK. At 593–639 the chain is on the vacuolar side; sequence WVVPYRSFEVDKVDPPFILPTIIAMFLSPGGTPDVVFFSGQGAVQTA. A helical membrane pass occupies residues 640 to 659; it reads LLFLALISIPVMLVIKPLFM. Residues 660–706 are Cytoplasmic-facing; that stretch reads KRFHFQEVERKKLGHHEEEHDDEALYTGHHGEEFEMGEVFVHQVIHT. A helical transmembrane segment spans residues 707–731; sequence IEFVLGAVSNTASYLRLWALSLAHS. The Vacuolar segment spans residues 732–749; the sequence is ELSSVFWERILIGQVERG. A helical membrane pass occupies residues 750–788; it reads NPFLAFVGFGAWLGASVAVLLLMESLSAFLHALRLHWVE. Residues 789–815 are Cytoplasmic-facing; it reads FQNKFYIGDGVRFIPYSATRILSEDDE.

Belongs to the V-ATPase 116 kDa subunit family. As to quaternary structure, the V-ATPase is a heteromultimeric enzyme.

The protein localises to the cytoplasmic vesicle membrane. The protein resides in the endosome membrane. Its subcellular location is the vacuole membrane. It is found in the lysosome membrane. Its function is as follows. Essential component of the vacuolar proton pump (V-ATPase), a multimeric enzyme that catalyzes the translocation of protons across the membranes. Required for assembly and activity of the V-ATPase. Required in both the contractile vacuole system and the endosomal/lysosomal system. Also required for cytosolic pH regulation. In Dictyostelium discoideum (Social amoeba), this protein is Vacuolar proton translocating ATPase 100 kDa subunit (vatM).